A 281-amino-acid chain; its full sequence is ATP synthase gamma chain (281 aa).

This sequence belongs to the ATPase gamma chain family. In terms of assembly, F-type ATPases have 2 components, CF(1) - the catalytic core - and CF(0) - the membrane proton channel. CF(1) has five subunits: alpha(3), beta(3), gamma(1), delta(1), epsilon(1). CF(0) has three main subunits: a, b and c.

It localises to the cell membrane. Produces ATP from ADP in the presence of a proton gradient across the membrane. The gamma chain is believed to be important in regulating ATPase activity and the flow of protons through the CF(0) complex. The polypeptide is ATP synthase gamma chain (Mesoplasma florum (strain ATCC 33453 / NBRC 100688 / NCTC 11704 / L1) (Acholeplasma florum)).